A 172-amino-acid polypeptide reads, in one-letter code: DNA-directed RNA polymerase II subunit RPB7 (172 aa).

It belongs to the eukaryotic RPB7/RPC8 RNA polymerase subunit family. As to quaternary structure, component of the RNA polymerase II (Pol II) complex consisting of 12 subunits. RPB4 and RPB7 form a subcomplex that protrudes from the 10-subunit Pol II core complex.

Its subcellular location is the nucleus. In terms of biological role, DNA-dependent RNA polymerase catalyzes the transcription of DNA into RNA using the four ribonucleoside triphosphates as substrates. Component of RNA polymerase II which synthesizes mRNA precursors and many functional non-coding RNAs. Pol II is the central component of the basal RNA polymerase II transcription machinery. It is composed of mobile elements that move relative to each other. RPB7 is part of a subcomplex with RPB4 that binds to a pocket formed by RPB1, RPB2 and RPB6 at the base of the clamp element. The RPB4-RPB7 subcomplex seems to lock the clamp via RPB7 in the closed conformation thus preventing double-stranded DNA to enter the active site cleft. The RPB4-RPB7 subcomplex binds single-stranded DNA and RNA. The polypeptide is DNA-directed RNA polymerase II subunit RPB7 (polr2g) (Danio rerio (Zebrafish)).